A 450-amino-acid chain; its full sequence is Phosphoglucosamine mutase (450 aa).

The active-site Phosphoserine intermediate is the Ser-102. 4 residues coordinate Mg(2+): Ser-102, Asp-243, Asp-245, and Asp-247. Ser-102 is modified (phosphoserine).

This sequence belongs to the phosphohexose mutase family. The cofactor is Mg(2+). Activated by phosphorylation.

The enzyme catalyses alpha-D-glucosamine 1-phosphate = D-glucosamine 6-phosphate. In terms of biological role, catalyzes the conversion of glucosamine-6-phosphate to glucosamine-1-phosphate. In Rhizobium johnstonii (strain DSM 114642 / LMG 32736 / 3841) (Rhizobium leguminosarum bv. viciae), this protein is Phosphoglucosamine mutase.